The primary structure comprises 362 residues: sn-glycerol-3-phosphate import ATP-binding protein UgpC (362 aa).

The ABC transporter domain occupies 4-235 (LTLQSVKKTY…PATVFVASFI (232 aa)). 37–44 (GPSGCGKS) contributes to the ATP binding site.

Belongs to the ABC transporter superfamily. sn-glycerol-3-phosphate importer (TC 3.A.1.1.3) family. The complex is composed of two ATP-binding proteins (UgpC), two transmembrane proteins (UgpA and UgpE) and a solute-binding protein (UgpB).

The protein localises to the cell inner membrane. It catalyses the reaction sn-glycerol 3-phosphate(out) + ATP + H2O = sn-glycerol 3-phosphate(in) + ADP + phosphate + H(+). In terms of biological role, part of the ABC transporter complex UgpBAEC involved in sn-glycerol-3-phosphate (G3P) import. Responsible for energy coupling to the transport system. The sequence is that of sn-glycerol-3-phosphate import ATP-binding protein UgpC from Paraburkholderia xenovorans (strain LB400).